The sequence spans 122 residues: MVRIAGRELPTNKRVDIALNYIYGIGPWRSRQILKELKVDFSTRVKDLLVGEIAAIREYIERNYVVESDLRRFELLNIKRLIEINSYKGKRHKMLLPVRGQRTRTNARTRRGVKRIIDLKGV.

This sequence belongs to the universal ribosomal protein uS13 family. Part of the 30S ribosomal subunit.

The protein localises to the plastid. Its subcellular location is the chloroplast. Functionally, located at the top of the head of the 30S subunit, it contacts several helices of the 16S rRNA. The polypeptide is Small ribosomal subunit protein uS13c (Cyanidium caldarium (Red alga)).